Consider the following 557-residue polypeptide: Probable WRKY transcription factor 20 (557 aa).

Over residues 1 to 12 (MNPQANDRKEFQ) the composition is skewed to basic and acidic residues. Disordered stretches follow at residues 1 to 36 (MNPQ…GGGA) and 76 to 215 (KPEP…DGYN). Polar residues predominate over residues 95-114 (SASSSSYTGRGFHQNTFTEQ). The span at 151–169 (SSHSPSSISDAAGSSSELS) shows a compositional bias: low complexity. The segment covering 193-207 (SIQTSQNDSRGSTPS) has biased composition (polar residues). Residues 205–269 (TPSILADDGY…YKGTHDHPKP (65 aa)) constitute a DNA-binding region (WRKY 1). Zn(2+) contacts are provided by Cys236, Cys241, His264, and His266. The disordered stretch occupies residues 257 to 348 (DIIYKGTHDH…PDDDDPFSKR (92 aa)). Residues 282-299 (QEERLDKYPSSTGRDEKG) are compositionally biased toward basic and acidic residues. Residues 303–314 (YNLSNPNEQTGN) are compositionally biased toward polar residues. A compositionally biased stretch (low complexity) spans 321–332 (SASDDGGEAAAS). The segment at residues 375 to 440 (SEVDILDDGY…YEGKHDHDVP (66 aa)) is a DNA-binding region (WRKY 2). Residues Cys406, Cys411, His435, and His437 each contribute to the Zn(2+) site. 2 disordered regions span residues 433 to 486 (GKHD…QHQN) and 520 to 557 (NQYG…QSGP). Residues 520 to 536 (NQYGQRETKNETQNGDI) are compositionally biased toward polar residues.

The protein belongs to the WRKY group I family.

The protein localises to the nucleus. Its function is as follows. Transcription factor. Interacts specifically with the W box (5'-(T)TGAC[CT]-3'), a frequently occurring elicitor-responsive cis-acting element. In Arabidopsis thaliana (Mouse-ear cress), this protein is Probable WRKY transcription factor 20 (WRKY20).